The primary structure comprises 214 residues: Adenylate kinase (214 aa).

10-15 (GAGKGT) is a binding site for ATP. Residues 30-59 (STGDMLRAAVKAGSELGLKAKEIMDAGKLV) are NMP. AMP-binding positions include T31, R36, 57 to 59 (KLV), 85 to 88 (GFPR), and Q92. Residues 122-159 (GRRVHAASGRVYHVKFNPPKVEDKDDVTGEELTIRKDD) form an LID region. Residues R123 and 132–133 (VY) contribute to the ATP site. 2 residues coordinate AMP: R156 and R167. Residue R200 coordinates ATP.

This sequence belongs to the adenylate kinase family. In terms of assembly, monomer.

It localises to the cytoplasm. It carries out the reaction AMP + ATP = 2 ADP. Its pathway is purine metabolism; AMP biosynthesis via salvage pathway; AMP from ADP: step 1/1. Its function is as follows. Catalyzes the reversible transfer of the terminal phosphate group between ATP and AMP. Plays an important role in cellular energy homeostasis and in adenine nucleotide metabolism. The chain is Adenylate kinase from Yersinia pseudotuberculosis serotype O:1b (strain IP 31758).